The chain runs to 438 residues: MKVAVIGAGLAGSEAAYKIAQAGYKVDLYEMRPEKQTPAHKTPYFAEIVCSNSFGSESLTSGAGLLKKEMEVLGSIILDVAKEFKVPAGQAFAVDREKFSKKLTEILENHPNINVIRQEVKTLPDADIIVIATGPLTSEEFSKEIQKITGSEYLYFYDAIAPVVDASTVDFSKGFWADRYGKGTGDYFNCVLSEQEYEIFYQELLKGEQVPLKDFERAVYFEGCLPIEEIARRGKETLLYGPMKPVGLIDPKTGKRPYAVVQLRKENIEGTLLSLVGFQTKLKYPEQKRIFSLIPALKDAEFVKLGSIHRNTFIQSQKLLKPTLQLRKKPNILFAGQITGVEGYMASAATGIIAGINVARMLEGKEPVVPPKTTMIGGLINYITTAKNELQPMGPNYALLPELEEKIKGKEERKLKKAEIALKDIKEWTKEIESAVFI.

Residue G7–G12 coordinates FAD.

Belongs to the MnmG family. TrmFO subfamily. The cofactor is FAD.

Its subcellular location is the cytoplasm. It catalyses the reaction uridine(54) in tRNA + (6R)-5,10-methylene-5,6,7,8-tetrahydrofolate + NADH + H(+) = 5-methyluridine(54) in tRNA + (6S)-5,6,7,8-tetrahydrofolate + NAD(+). The enzyme catalyses uridine(54) in tRNA + (6R)-5,10-methylene-5,6,7,8-tetrahydrofolate + NADPH + H(+) = 5-methyluridine(54) in tRNA + (6S)-5,6,7,8-tetrahydrofolate + NADP(+). In terms of biological role, catalyzes the folate-dependent formation of 5-methyl-uridine at position 54 (M-5-U54) in all tRNAs. The polypeptide is Methylenetetrahydrofolate--tRNA-(uracil-5-)-methyltransferase TrmFO (Sulfurihydrogenibium sp. (strain YO3AOP1)).